The sequence spans 414 residues: 3-oxoacyl-[acyl-carrier-protein] synthase 2 (414 aa).

The region spanning 4 to 411 (NIRVVITGMG…GHNAVLVFKK (408 aa)) is the Ketosynthase family 3 (KS3) domain. Active-site for beta-ketoacyl synthase activity residues include cysteine 165, histidine 304, and histidine 341.

It belongs to the thiolase-like superfamily. Beta-ketoacyl-ACP synthases family.

The catalysed reaction is a fatty acyl-[ACP] + malonyl-[ACP] + H(+) = a 3-oxoacyl-[ACP] + holo-[ACP] + CO2. It carries out the reaction (9Z)-hexadecenoyl-[ACP] + malonyl-[ACP] + H(+) = 3-oxo-(11Z)-octadecenoyl-[ACP] + holo-[ACP] + CO2. Its pathway is lipid metabolism; fatty acid biosynthesis. Functionally, involved in the type II fatty acid elongation cycle. Catalyzes the elongation of a wide range of acyl-ACP by the addition of two carbons from malonyl-ACP to an acyl acceptor. Can efficiently catalyze the conversion of palmitoleoyl-ACP (cis-hexadec-9-enoyl-ACP) to cis-vaccenoyl-ACP (cis-octadec-11-enoyl-ACP), an essential step in the thermal regulation of fatty acid composition. In Staphylococcus aureus (strain MRSA252), this protein is 3-oxoacyl-[acyl-carrier-protein] synthase 2 (fabF).